The primary structure comprises 489 residues: Glycogen synthase (489 aa).

Lys15 serves as a coordination point for ADP-alpha-D-glucose.

It belongs to the glycosyltransferase 1 family. Bacterial/plant glycogen synthase subfamily.

It catalyses the reaction [(1-&gt;4)-alpha-D-glucosyl](n) + ADP-alpha-D-glucose = [(1-&gt;4)-alpha-D-glucosyl](n+1) + ADP + H(+). It participates in glycan biosynthesis; glycogen biosynthesis. Synthesizes alpha-1,4-glucan chains using ADP-glucose. The polypeptide is Glycogen synthase (Francisella tularensis subsp. novicida (strain U112)).